We begin with the raw amino-acid sequence, 187 residues long: Peptidyl-tRNA hydrolase (187 aa).

Phe14 lines the tRNA pocket. The active-site Proton acceptor is His19. TRNA contacts are provided by Tyr64, Asn66, and Asn112.

The protein belongs to the PTH family. Monomer.

It is found in the cytoplasm. It carries out the reaction an N-acyl-L-alpha-aminoacyl-tRNA + H2O = an N-acyl-L-amino acid + a tRNA + H(+). Hydrolyzes ribosome-free peptidyl-tRNAs (with 1 or more amino acids incorporated), which drop off the ribosome during protein synthesis, or as a result of ribosome stalling. In terms of biological role, catalyzes the release of premature peptidyl moieties from peptidyl-tRNA molecules trapped in stalled 50S ribosomal subunits, and thus maintains levels of free tRNAs and 50S ribosomes. This is Peptidyl-tRNA hydrolase from Oceanobacillus iheyensis (strain DSM 14371 / CIP 107618 / JCM 11309 / KCTC 3954 / HTE831).